Reading from the N-terminus, the 114-residue chain is Cytochrome c2 (114 aa).

The residue at position 1 (glutamine 1) is a Pyrrolidone carboxylic acid. Residues cysteine 13, cysteine 16, histidine 17, and methionine 93 each contribute to the heme c site.

Belongs to the cytochrome c family. Post-translationally, binds 1 heme c group covalently per subunit.

Its subcellular location is the periplasm. Functionally, cytochrome c2 is found mainly in purple, non-sulfur, photosynthetic bacteria where it functions as the electron donor to the oxidized bacteriochlorophyll in the photophosphorylation pathway. However, it may also have a role in the respiratory chain and is found in some non-photosynthetic bacteria. The protein is Cytochrome c2 of Rhodopseudomonas palustris.